Consider the following 662-residue polypeptide: Probable quinol oxidase subunit 1 (662 aa).

2 helical membrane-spanning segments follow: residues 14–34 (WMIT…IAVI) and 58–78 (IMYL…ALLI). H102 is a Fe(II)-heme a binding site. The next 8 membrane-spanning stretches (helical) occupy residues 103–123 (GVIM…NIVV), 140–160 (VSFW…IIGG), 187–207 (IAIQ…FVTI), 228–248 (FITT…LALM), 273–293 (FFWV…FGIY), 311–331 (MVWA…HHFF), 336–356 (GALI…PTGV), and 376–396 (MLFS…GVML). Cu cation is bound by residues H279, Y283, H328, and H329. A cross-link (1'-histidyl-3'-tyrosine (His-Tyr)) is located at residues 279–283 (HPEVY). Residue H414 participates in heme a3 binding. 5 consecutive transmembrane segments (helical) span residues 415–435 (FHYT…IFWY), 451–471 (CFWF…ILGL), 493–513 (ISTI…VSIV), 587–604 (PVGF…FFLI), and 608–627 (VIPA…YRSF). H416 serves as a coordination point for Fe(II)-heme a.

The protein belongs to the heme-copper respiratory oxidase family. The cofactor is Cu cation. Requires ferriheme a as cofactor. It depends on Heme A3. as a cofactor.

The protein localises to the cell membrane. It catalyses the reaction 2 a quinol + O2 = 2 a quinone + 2 H2O. Its pathway is energy metabolism; oxidative phosphorylation. Functionally, catalyzes quinol oxidation with the concomitant reduction of oxygen to water. In Staphylococcus aureus (strain USA300), this protein is Probable quinol oxidase subunit 1 (qoxB).